The following is a 449-amino-acid chain: Glucose-6-phosphate isomerase (449 aa).

Glu291 functions as the Proton donor in the catalytic mechanism. Residues His312 and Lys426 contribute to the active site.

The protein belongs to the GPI family.

Its subcellular location is the cytoplasm. The catalysed reaction is alpha-D-glucose 6-phosphate = beta-D-fructose 6-phosphate. It participates in carbohydrate biosynthesis; gluconeogenesis. The protein operates within carbohydrate degradation; glycolysis; D-glyceraldehyde 3-phosphate and glycerone phosphate from D-glucose: step 2/4. Catalyzes the reversible isomerization of glucose-6-phosphate to fructose-6-phosphate. This Streptococcus pyogenes serotype M12 (strain MGAS2096) protein is Glucose-6-phosphate isomerase.